A 167-amino-acid chain; its full sequence is Lipoprotein signal peptidase (167 aa).

The next 2 helical transmembrane spans lie at 67–87 and 91–111; these read WILV…LWRA and LVAL…IDRI. Catalysis depends on residues Asp-118 and Asp-136. Residues 127–147 form a helical membrane-spanning segment; the sequence is FSWYVFNLADAAIVAGVALLI.

This sequence belongs to the peptidase A8 family.

The protein resides in the cell inner membrane. It carries out the reaction Release of signal peptides from bacterial membrane prolipoproteins. Hydrolyzes -Xaa-Yaa-Zaa-|-(S,diacylglyceryl)Cys-, in which Xaa is hydrophobic (preferably Leu), and Yaa (Ala or Ser) and Zaa (Gly or Ala) have small, neutral side chains.. It participates in protein modification; lipoprotein biosynthesis (signal peptide cleavage). In terms of biological role, this protein specifically catalyzes the removal of signal peptides from prolipoproteins. In Beijerinckia indica subsp. indica (strain ATCC 9039 / DSM 1715 / NCIMB 8712), this protein is Lipoprotein signal peptidase.